The sequence spans 359 residues: MGSDTSTQLLGTDGIFFDAAWDVRVTDTSLRDGSHHKRHQFTADEVRAIVAALDGAGVPVIEVTHGDGLGGSSFNYGFSKTPEQELIKLAAQTATNAKIAFLMLPGVGTKEDIIEAQGNGGSICRIATHCTEADVSIQHFGLARERGLETVGFLMMSHTISPEKLAKQARIMADAGCQCVYVVDSAGALVLDGVADRVAAVVAELGSDAQVGFHGHENLGLGVANSIEAVRAGAKQIDGSTRRFGAGAGNAPVEALIGVFDKIGVKTGIDFFDIADAAEEVVAPAMPAECLLDRNALIMGYSGVYSSFLKHAIRQGERYGVPAHQLLHRAGERKLIGGQEDQLIDIALEIQRENAANGQ.

The 253-residue stretch at 23-275 folds into the Pyruvate carboxyltransferase domain; that stretch reads VRVTDTSLRD…KTGIDFFDIA (253 aa). A substrate-binding site is contributed by 31 to 32; it reads RD. Asp32 contributes to the Mn(2+) binding site. His35 acts as the Proton acceptor in catalysis. Positions 185 and 214 each coordinate substrate. Positions 214 and 216 each coordinate Mn(2+). Tyr305 is a substrate binding site.

It belongs to the 4-hydroxy-2-oxovalerate aldolase family.

The enzyme catalyses (S)-4-hydroxy-2-oxopentanoate = acetaldehyde + pyruvate. This chain is 4-hydroxy-2-oxovalerate aldolase 1, found in Mycobacteroides abscessus (strain ATCC 19977 / DSM 44196 / CCUG 20993 / CIP 104536 / JCM 13569 / NCTC 13031 / TMC 1543 / L948) (Mycobacterium abscessus).